A 128-amino-acid chain; its full sequence is SH2 domain-containing protein 1A (128 aa).

One can recognise an SH2 domain in the interval 6-102 (VYHGKISRET…GIVIPLQYPV (97 aa)). The tract at residues 67–92 (ETAPGVHKRYFRKIKNLISAFQKPDQ) is interaction with FYN SH3 domain. Lys-89 bears the N6-acetyllysine mark. Residues 106–128 (SSARSTQGTTGIREDPDVCLKAP) form a disordered region. Over residues 117 to 128 (IREDPDVCLKAP) the composition is skewed to basic and acidic residues.

As to quaternary structure, interacts with CD84, CD244, LY9, SLAMF1 and FYN. Interacts with NTRK1, NTRK2 and NTRK3.

Its subcellular location is the cytoplasm. Cytoplasmic adapter regulating receptors of the signaling lymphocytic activation molecule (SLAM) family such as SLAMF1, CD244, LY9, CD84, SLAMF6 and SLAMF7. In SLAM signaling seems to cooperate with SH2D1B/EAT-2. Initially it has been proposed that association with SLAMF1 prevents SLAMF1 binding to inhibitory effectors including INPP5D/SHIP1 and PTPN11/SHP-2. However, by simultaneous interactions, recruits FYN which subsequently phosphorylates and activates SLAMF1. Positively regulates CD244/2B4- and CD84-mediated natural killer (NK) cell functions. Can also promote CD48-, SLAMF6 -, LY9-, and SLAMF7-mediated NK cell activation. In the context of NK cell-mediated cytotoxicity enhances conjugate formation with target cells. May also regulate the activity of the neurotrophin receptors NTRK1, NTRK2 and NTRK3. The polypeptide is SH2 domain-containing protein 1A (SH2D1A) (Macaca mulatta (Rhesus macaque)).